The sequence spans 520 residues: Endosomal/lysosomal proton channel TMEM175 (520 aa).

The tract at residues 1–27 (MGENDESEIIEHHDDEEMEKRRPPRTH) is disordered. The Cytoplasmic portion of the chain corresponds to 1-49 (MGENDESEIIEHHDDEEMEKRRPPRTHAQSFLESVASSVKEGHSSTQSS). A compositionally biased stretch (basic and acidic residues) spans 9 to 21 (IIEHHDDEEMEKR). Residues 50–72 (HRLLAYSDALISIIATVMILPVA) traverse the membrane as a helical segment. The RxxxFSD motif 1 signature appears at 51–57 (RLLAYSD). Residues 73-93 (HTKIQEDEELKQSIQALLTTK) lie on the Lumenal side of the membrane. The interval 74–79 (TKIQED) is short helix H1-1. Residues 81–87 (ELKQSIQ) are short helix H2-1. The chain crosses the membrane as a helical span at residues 94–116 (IAVYLMTFLIVTVAWAAHIRLFQ). Residues 117–122 (VIERID) are Cytoplasmic-facing. Residues 123-144 (DTLALLNLACMMLITFLPYTFS) form a helical membrane-spanning segment. Residues 145–154 (LMATFPNNIL) lie on the Lumenal side of the membrane. A helical transmembrane segment spans residues 155 to 176 (GILLFCACVMVIGLIQALIVLY). Over 177-200 (GFSHPFLLNDQIQMSENQAYYKQH) the chain is Cytoplasmic. The next 2 helical transmembrane spans lie at 201–221 (ILKV…FSFI) and 222–242 (FFQL…ISQC). Over 243-274 (LKWIRSKAIGGQTDESPDSMPFYTYHPSEPLS) the chain is Cytoplasmic. Residues 275-299 (KERVEAFSDGVFAIVATLLILDICE) form a helical membrane-spanning segment. The RxxxFSD motif 2 motif lies at 277-283 (RVEAFSD). Residues 300–326 (GNVPDPSVVKKKFDNSLIAALQEYGPE) lie on the Lumenal side of the membrane. The tract at residues 305 to 313 (PSVVKKKFD) is short helix H1-2. The segment at 315–321 (SLIAALQ) is short helix H2-2. The chain crosses the membrane as a helical span at residues 327–349 (YLAYFGSFVTVGLLWFVHHSLFL). Topologically, residues 350-355 (HVTKAT) are cytoplasmic. The helical transmembrane segment at 356 to 377 (RLMGLFNTFSLAFVGGLPLAYQ) threads the bilayer. The Lumenal segment spans residues 378–392 (LTHESPRGSRNELEA). The helical transmembrane segment at 393–413 (VQISCVIIFFASLFQLAIWVT) threads the bilayer. Topologically, residues 414 to 433 (ALFTERETLHPYVRYGGREH) are cytoplasmic. The chain crosses the membrane as a helical span at residues 434–457 (TFMLAKLSLYPCVALGTFFITCIL). At 458–459 (SR) the chain is on the lumenal side. Residues 460–486 (FSAPIFHMMEICIPFAFLLLRLLVRVA) traverse the membrane as a helical segment. The Cytoplasmic segment spans residues 487–520 (LALLRWLFCSARNDLERIPVEEEESRLPINDIVT).

This sequence belongs to the TMEM175 family. Homodimer.

It is found in the endosome membrane. Its subcellular location is the lysosome membrane. It catalyses the reaction H(+)(in) = H(+)(out). The enzyme catalyses K(+)(in) = K(+)(out). With respect to regulation, active at low pH (under pH 4.6): proton channel activity is activated by luminal side protons. Polyunsaturated fatty acids, such as arachidonic acid, also activate the channel activity. Its function is as follows. Proton-activated proton channel that catalyzes proton efflux from endosomes and lysosomes to maintain a steady-state pH. Activated at low pH (under pH 4.6) by luminal side protons: selectively mediates lysosomal proton release from lysosomes, eliciting a proton leak that balances V-ATPase activity to maintain pH homeostasis. Regulation of lumenal pH stability is required for autophagosome-lysosome fusion. Also acts as a potassium channel at higher pH, regulating potassium conductance in endosomes and lysosomes. The chain is Endosomal/lysosomal proton channel TMEM175 from Danio rerio (Zebrafish).